Consider the following 66-residue polypeptide: MKTNALRDMTNDELLQKLAEIRQALFNLNFQHVTGQLENTAQINKNRKDIARILTILHEREQKTAA.

Belongs to the universal ribosomal protein uL29 family.

The polypeptide is Large ribosomal subunit protein uL29 (Syntrophobacter fumaroxidans (strain DSM 10017 / MPOB)).